The primary structure comprises 101 residues: NADH-quinone oxidoreductase subunit K (101 aa).

3 helical membrane-spanning segments follow: residues 4-24, 30-50, and 65-85; these read LEHY…GIFL, IVIL…LVAF, and FVLT…VTFF.

The protein belongs to the complex I subunit 4L family. In terms of assembly, NDH-1 is composed of 14 different subunits. Subunits NuoA, H, J, K, L, M, N constitute the membrane sector of the complex.

The protein localises to the cell inner membrane. It carries out the reaction a quinone + NADH + 5 H(+)(in) = a quinol + NAD(+) + 4 H(+)(out). Functionally, NDH-1 shuttles electrons from NADH, via FMN and iron-sulfur (Fe-S) centers, to quinones in the respiratory chain. The immediate electron acceptor for the enzyme in this species is believed to be ubiquinone. Couples the redox reaction to proton translocation (for every two electrons transferred, four hydrogen ions are translocated across the cytoplasmic membrane), and thus conserves the redox energy in a proton gradient. The chain is NADH-quinone oxidoreductase subunit K from Cereibacter sphaeroides (strain ATCC 17029 / ATH 2.4.9) (Rhodobacter sphaeroides).